The primary structure comprises 433 residues: Epi-neemfruitin B synthase L1AT (433 aa).

Catalysis depends on proton acceptor residues His151 and Asp372.

It belongs to the plant acyltransferase family. Monomer. In terms of tissue distribution, mainly expressed in petioles and, to a lower extent, in roots.

It carries out the reaction (21S)-21-acetyl-1-hydroxy-apo-melianone + acetyl-CoA = epi-neemfruitin B + acetate + CoA + H(+). It functions in the pathway secondary metabolite biosynthesis; terpenoid biosynthesis. Functionally, acetyltransferase involved in the biosynthesis of limonoids triterpene natural products such as azadirachtin, an antifeedant widely used as bioinsecticide, and possessing many medicinal applications including anti-tumoral, anti-malarial, anti-rheumatic, antibacterial, anti-inflammatory, anti-pyretic and diuretic effects. Catalyzes the formation of epi-neemfruitin B from (21S)-21-acetyl-1-hydroxy-apo-melianone. The polypeptide is Epi-neemfruitin B synthase L1AT (Melia azedarach (Chinaberry tree)).